The primary structure comprises 460 residues: MAPGRAVAGLLLLAAAGLGGVAEGPGLAFSEDVLSVFGANLSLSAAQLQHLLEQMGAASRVGVPEPGQLHFNQCLTAEEIFSLHGFSNATQITSSKFSVICPAVLQQLNFHPCEDRPKHKTRPSHSEVWGYGFLSVTIINLASLLGLILTPLIKKSYFPKILTFFVGLAIGTLFSNAIFQLIPEAFGFDPKVDSYVEKAVAVFGGFYLLFFFERMLKMLLKTYGQNGHTHFGNDNFGPQEKTHQPKALPAINGVTCYANPAVTEANGHIHFDNVSVVSLQDGKKEPSSCTCLKGPKLSEIGTIAWMITLCDALHNFIDGLAIGASCTLSLLQGLSTSIAILCEEFPHELGDFVILLNAGMSTRQALLFNFLSACSCYVGLAFGILVGNNFAPNIIFALAGGMFLYISLADMFPEMNDMLREKVTGRKTDFTFFMIQNAGMLTGFTAILLITLYAGEIELE.

The N-terminal stretch at 1 to 22 (MAPGRAVAGLLLLAAAGLGGVA) is a signal peptide. The Extracellular segment spans residues 23–132 (EGPGLAFSED…PSHSEVWGYG (110 aa)). N-linked (GlcNAc...) asparagine glycosylation is found at N40 and N88. Residues 133 to 153 (FLSVTIINLASLLGLILTPLI) traverse the membrane as a helical segment. Residues 154-160 (KKSYFPK) are Cytoplasmic-facing. Residues 161–181 (ILTFFVGLAIGTLFSNAIFQL) traverse the membrane as a helical segment. Over 182–191 (IPEAFGFDPK) the chain is Extracellular. Residues 192 to 212 (VDSYVEKAVAVFGGFYLLFFF) traverse the membrane as a helical segment. Residues 213–365 (ERMLKMLLKT…LNAGMSTRQA (153 aa)) lie on the Cytoplasmic side of the membrane. The XEXPHE-motif motif lies at 343 to 348 (EEFPHE). Residues 366–386 (LLFNFLSACSCYVGLAFGILV) form a helical membrane-spanning segment. Over 387–388 (GN) the chain is Extracellular. The chain crosses the membrane as a helical span at residues 389–409 (NFAPNIIFALAGGMFLYISLA). The Cytoplasmic portion of the chain corresponds to 410–429 (DMFPEMNDMLREKVTGRKTD). A helical transmembrane segment spans residues 430 to 450 (FTFFMIQNAGMLTGFTAILLI). The Extracellular segment spans residues 451–460 (TLYAGEIELE).

It belongs to the ZIP transporter (TC 2.A.5) family. In terms of assembly, homodimer. In terms of processing, N-glycosylated. N-glycosylation is not required for proper iron and zinc transport. Ubiquitously expressed. Expressed in thymus, placenta, lung, liver, pancreas, salivary gland and, to a lower extent, in spleen, testis, ovary, small intestine, colon, leukocyte, heart. Highest expression is observed in pancreas. Expressed by macrophages (at protein level). Expressed by microvascular capillary endothelial cells that constitute the blood-brain barrier (at protein level).

It localises to the cell membrane. It is found in the lysosome membrane. The protein resides in the apical cell membrane. Its subcellular location is the basolateral cell membrane. It catalyses the reaction Zn(2+)(out) + 2 hydrogencarbonate(out) = Zn(2+)(in) + 2 hydrogencarbonate(in). It carries out the reaction selenite(out) + Zn(2+)(out) + hydrogencarbonate(out) = selenite(in) + Zn(2+)(in) + hydrogencarbonate(in). The enzyme catalyses Mn(2+)(out) + 2 hydrogencarbonate(out) = Mn(2+)(in) + 2 hydrogencarbonate(in). The catalysed reaction is Fe(2+)(out) + 2 hydrogencarbonate(out) = Fe(2+)(in) + 2 hydrogencarbonate(in). It catalyses the reaction Cd(2+)(out) + 2 hydrogencarbonate(out) = Cd(2+)(in) + 2 hydrogencarbonate(in). It carries out the reaction Co(2+)(out) + 2 hydrogencarbonate(out) = Co(2+)(in) + 2 hydrogencarbonate(in). Electroneutral divalent metal cation:bicarbonate symporter of the plasma membrane mediating the cellular uptake of zinc and manganese, two divalent metal cations important for development, tissue homeostasis and immunity. Transports an electroneutral complex composed of a divalent metal cation and two bicarbonate anions or alternatively a bicarbonate and a selenite anion. Thereby, it also contributes to the cellular uptake of selenium, an essential trace metal and micronutrient. Also imports cadmium a non-essential metal which is cytotoxic and carcinogenic. May also transport iron and cobalt through membranes. Through zinc import, indirectly regulates the metal-dependent transcription factor MTF1 and the expression of some metalloproteases involved in cartilage catabolism and also probably heart development. Also indirectly regulates the expression of proteins involved in cell morphology and cytoskeleton organization. Indirectly controls innate immune function and inflammatory response by regulating zinc cellular uptake which in turn modulates the expression of genes specific of these processes. Protects, for instance, cells from injury and death at the onset of inflammation. By regulating zinc influx into monocytes also directly modulates their adhesion to endothelial cells and arteries. Reclaims manganese from the bile at the apical membrane of hepatocytes, thereby regulating the activity of the manganese-dependent enzymes through the systemic levels of the nutrient. Also participates in manganese reabsorption in the proximal tubule of the kidney. By mediating the extracellular uptake of manganese by cells of the blood-brain barrier, may also play a role in the transport of the micronutrient to the brain. With manganese cellular uptake also participates in mitochondrial proper function. Finally, also probably functions intracellularly, translocating zinc from lysosome to cytosol to indirectly enhance the expression of specific genes during TCR-mediated T cell activation. The polypeptide is Metal cation symporter ZIP8 (Homo sapiens (Human)).